The primary structure comprises 145 residues: MIKTILLLLINFMLILIVNGDIWNYCDGNINPTFKINKLTLLPDPPLVGKEVTISLEGSLNEQITSGSSIFNVAFFINGGWRQLPTFHNDICKVLSCPVSAGPFTYSTSIKVPIFTPHGQYKGQLTLTDQSNRNVTCLTFQTYLK.

The signal sequence occupies residues 1-20 (MIKTILLLLINFMLILIVNG). An N-linked (GlcNAc...) asparagine glycan is attached at Asn134.

The protein belongs to the NPC2 family. As to quaternary structure, monomer.

In terms of biological role, catalyzes the intermembrane transfer of phosphatidylglycerol and phosphatidylinositol. The sequence is that of Putative phosphatidylglycerol/phosphatidylinositol transfer protein DDB_G0282179 from Dictyostelium discoideum (Social amoeba).